The following is a 332-amino-acid chain: 2,3-diketo-L-gulonate reductase (332 aa).

Histidine 44 acts as the Proton donor in catalysis. Residues isoleucine 168–serine 174, tryptophan 224–lysine 225, and glycine 304–glutamate 306 contribute to the NAD(+) site.

The protein belongs to the LDH2/MDH2 oxidoreductase family. DlgD subfamily. As to quaternary structure, homodimer.

It localises to the cytoplasm. The catalysed reaction is 3-dehydro-L-gulonate + NAD(+) = 2,3-dioxo-L-gulonate + NADH + H(+). It catalyses the reaction 3-dehydro-L-gulonate + NADP(+) = 2,3-dioxo-L-gulonate + NADPH + H(+). Its function is as follows. Catalyzes the reduction of 2,3-diketo-L-gulonate in the presence of NADH, to form 3-keto-L-gulonate. This chain is 2,3-diketo-L-gulonate reductase, found in Escherichia coli (strain K12 / MC4100 / BW2952).